The primary structure comprises 1011 residues: CRM-domain containing factor CFM2, chloroplastic (1011 aa).

The N-terminal 45 residues, 1-45 (MLLPLFHQQPLILAKTFPDRIFPPFLVPNTLVSRRNVSRANSGIF), are a transit peptide targeting the chloroplast. A compositionally biased stretch (basic and acidic residues) spans 77-90 (HDSPTRRITGEESG). The disordered stretch occupies residues 77–96 (HDSPTRRITGEESGKNSPGE). CRM domains follow at residues 164–260 (LTLP…YFVS), 376–473 (PKLT…AVSS), and 577–677 (EGIT…QCLR). Disordered regions lie at residues 721 to 810 (DSAT…GNSL) and 841 to 872 (LNAN…DGLV). Residues 722 to 736 (SATNETWSDGESSNM) are compositionally biased toward polar residues. Positions 743-757 (ENQHTEPEKAREKIE) are enriched in basic and acidic residues. Positions 762–771 (SDLSVPSSGE) are enriched in polar residues. Residues 772–782 (ENWEDDSEGEV) show a composition bias toward acidic residues. The segment covering 849-859 (GSSTGSGSQIS) has biased composition (polar residues). A CRM 4 domain is found at 873–972 (TDLSNRERLI…WGAEEEMKSF (100 aa)).

In terms of assembly, interacts with RNA. Part of large ribonucleo-protein particles that contain CAF1 and/or CAF2.

The protein resides in the plastid. It localises to the chloroplast stroma. Binds specific group II introns in chloroplasts and facilitates their splicing. Acts on both subgroup IIA and subgroup IIB introns. The substrates of the subgroup IIB also require the CRM domain proteins CAF1 or CAF2, with a simultaneous binding of CFM2 and CAF1 or CAF2. Can bind to and promote the splicing of the single group I intron in chloroplast tRNA transcript of trnL-UAA gene. The sequence is that of CRM-domain containing factor CFM2, chloroplastic from Arabidopsis thaliana (Mouse-ear cress).